The chain runs to 380 residues: tRNA-specific 2-thiouridylase MnmA (380 aa).

Residues 26–33 (AMSGGVDS) and Leu52 each bind ATP. The active-site Nucleophile is the Cys120. Cys120 and Cys217 are joined by a disulfide. Residue Gly144 coordinates ATP. The tract at residues 166 to 168 (RDQ) is interaction with tRNA. Cys217 acts as the Cysteine persulfide intermediate in catalysis.

This sequence belongs to the MnmA/TRMU family.

The protein localises to the cytoplasm. The catalysed reaction is S-sulfanyl-L-cysteinyl-[protein] + uridine(34) in tRNA + AH2 + ATP = 2-thiouridine(34) in tRNA + L-cysteinyl-[protein] + A + AMP + diphosphate + H(+). Functionally, catalyzes the 2-thiolation of uridine at the wobble position (U34) of tRNA, leading to the formation of s(2)U34. The chain is tRNA-specific 2-thiouridylase MnmA from Roseobacter denitrificans (strain ATCC 33942 / OCh 114) (Erythrobacter sp. (strain OCh 114)).